The primary structure comprises 355 residues: Holliday junction branch migration complex subunit RuvB (355 aa).

The tract at residues Thr-4–Tyr-195 is large ATPase domain (RuvB-L). Residues Leu-34, Arg-35, Gly-76, Lys-79, Thr-80, Thr-81, Glu-142 to Tyr-144, Arg-185, Tyr-195, and Arg-232 each bind ATP. A Mg(2+)-binding site is contributed by Thr-80. The tract at residues Thr-196–Asp-266 is small ATPAse domain (RuvB-S). A head domain (RuvB-H) region spans residues Ser-269–Leu-355. Residues Arg-305, Arg-324, and Arg-329 each contribute to the DNA site.

It belongs to the RuvB family. As to quaternary structure, homohexamer. Forms an RuvA(8)-RuvB(12)-Holliday junction (HJ) complex. HJ DNA is sandwiched between 2 RuvA tetramers; dsDNA enters through RuvA and exits via RuvB. An RuvB hexamer assembles on each DNA strand where it exits the tetramer. Each RuvB hexamer is contacted by two RuvA subunits (via domain III) on 2 adjacent RuvB subunits; this complex drives branch migration. In the full resolvosome a probable DNA-RuvA(4)-RuvB(12)-RuvC(2) complex forms which resolves the HJ.

The protein localises to the cytoplasm. The catalysed reaction is ATP + H2O = ADP + phosphate + H(+). Its function is as follows. The RuvA-RuvB-RuvC complex processes Holliday junction (HJ) DNA during genetic recombination and DNA repair, while the RuvA-RuvB complex plays an important role in the rescue of blocked DNA replication forks via replication fork reversal (RFR). RuvA specifically binds to HJ cruciform DNA, conferring on it an open structure. The RuvB hexamer acts as an ATP-dependent pump, pulling dsDNA into and through the RuvAB complex. RuvB forms 2 homohexamers on either side of HJ DNA bound by 1 or 2 RuvA tetramers; 4 subunits per hexamer contact DNA at a time. Coordinated motions by a converter formed by DNA-disengaged RuvB subunits stimulates ATP hydrolysis and nucleotide exchange. Immobilization of the converter enables RuvB to convert the ATP-contained energy into a lever motion, pulling 2 nucleotides of DNA out of the RuvA tetramer per ATP hydrolyzed, thus driving DNA branch migration. The RuvB motors rotate together with the DNA substrate, which together with the progressing nucleotide cycle form the mechanistic basis for DNA recombination by continuous HJ branch migration. Branch migration allows RuvC to scan DNA until it finds its consensus sequence, where it cleaves and resolves cruciform DNA. The polypeptide is Holliday junction branch migration complex subunit RuvB (Cupriavidus metallidurans (strain ATCC 43123 / DSM 2839 / NBRC 102507 / CH34) (Ralstonia metallidurans)).